Reading from the N-terminus, the 391-residue chain is Formate-dependent phosphoribosylglycinamide formyltransferase (391 aa).

Residues 20 to 21 (EL) and Glu-80 each bind N(1)-(5-phospho-beta-D-ribosyl)glycinamide. Residues Arg-112, Lys-153, 158-163 (SSGKGQ), 193-196 (EGFI), and Glu-201 contribute to the ATP site. Positions 117 to 306 (RLAAETLGLP…EFALHVRAIL (190 aa)) constitute an ATP-grasp domain. The Mg(2+) site is built by Glu-265 and Glu-277. N(1)-(5-phospho-beta-D-ribosyl)glycinamide is bound by residues Asp-284, Lys-354, and 361–362 (RR).

This sequence belongs to the PurK/PurT family. As to quaternary structure, homodimer.

It carries out the reaction N(1)-(5-phospho-beta-D-ribosyl)glycinamide + formate + ATP = N(2)-formyl-N(1)-(5-phospho-beta-D-ribosyl)glycinamide + ADP + phosphate + H(+). Its pathway is purine metabolism; IMP biosynthesis via de novo pathway; N(2)-formyl-N(1)-(5-phospho-D-ribosyl)glycinamide from N(1)-(5-phospho-D-ribosyl)glycinamide (formate route): step 1/1. Involved in the de novo purine biosynthesis. Catalyzes the transfer of formate to 5-phospho-ribosyl-glycinamide (GAR), producing 5-phospho-ribosyl-N-formylglycinamide (FGAR). Formate is provided by PurU via hydrolysis of 10-formyl-tetrahydrofolate. The sequence is that of Formate-dependent phosphoribosylglycinamide formyltransferase from Shewanella sp. (strain ANA-3).